We begin with the raw amino-acid sequence, 485 residues long: GTPase Obg (485 aa).

An Obg domain is found at 2–159 (PRFVDRVVIH…RDLTLELKTV (158 aa)). Residues 160–341 (ADVGLIGFPS…LIFALWEMVK (182 aa)) form the OBG-type G domain. Residues 166–173 (GFPSAGKS), 191–195 (FTTLV), 212–215 (DVPG), 292–295 (NKID), and 322–324 (STV) each bind GTP. Mg(2+) contacts are provided by serine 173 and threonine 193. Residues 359–437 (PIPVDESGFT…IGDVTFDWEP (79 aa)) form the OCT domain. Residues 450–485 (RGTDIRLEQTDRVGAAERKAARRERRQPGESGGEDS) are disordered. The span at 452–468 (TDIRLEQTDRVGAAERK) shows a compositional bias: basic and acidic residues.

This sequence belongs to the TRAFAC class OBG-HflX-like GTPase superfamily. OBG GTPase family. In terms of assembly, monomer. The cofactor is Mg(2+).

It localises to the cytoplasm. An essential GTPase which binds GTP, GDP and possibly (p)ppGpp with moderate affinity, with high nucleotide exchange rates and a fairly low GTP hydrolysis rate. Plays a role in control of the cell cycle, stress response, ribosome biogenesis and in those bacteria that undergo differentiation, in morphogenesis control. The chain is GTPase Obg from Mycolicibacterium smegmatis (strain ATCC 700084 / mc(2)155) (Mycobacterium smegmatis).